The chain runs to 393 residues: SH3 domain-binding protein 5-like (393 aa).

Residues 1-58 (MAELRQVPGGRETPQGELRPEVVEDEVPRSPVAEEPGGGGSSSSEAKLSPREEEELDP) are disordered. At threonine 13 the chain carries Phosphothreonine. Residues 18–28 (LRPEVVEDEVP) show a composition bias toward basic and acidic residues. Phosphoserine is present on residues serine 30 and serine 49. Coiled coils occupy residues 59–140 (RIQE…YERA) and 169–272 (WQEM…EQIH). The disordered stretch occupies residues 273 to 332 (ARRRGGLPPHPLGPRRSSPVGAEAGPEDMEDGDSGIEGAEGAGLEEGSSLGPGPAPDTDT). The span at 297 to 306 (GPEDMEDGDS) shows a compositional bias: acidic residues. A compositionally biased stretch (low complexity) spans 317–332 (EEGSSLGPGPAPDTDT). Serine 343, serine 350, serine 358, serine 362, and serine 378 each carry phosphoserine. The interval 362-393 (SLDGQELGTRSGGRRGSDGGARGGRHQRSVSL) is disordered. Over residues 384–393 (GGRHQRSVSL) the composition is skewed to basic residues.

It belongs to the SH3BP5 family.

Functions as a guanine nucleotide exchange factor (GEF) for RAB11A. The protein is SH3 domain-binding protein 5-like (SH3BP5L) of Homo sapiens (Human).